The chain runs to 546 residues: Medium-chain-fatty-acid--CoA ligase (546 aa).

Thr-185 contributes to the Mg(2+) binding site. ATP-binding residues include Trp-235 and Thr-329. Glu-330 serves as a coordination point for Mg(2+). Asp-417, Lys-434, Lys-438, and Trp-443 together coordinate ATP.

It belongs to the ATP-dependent AMP-binding enzyme family.

It localises to the cytoplasm. It catalyses the reaction a medium-chain fatty acid + ATP + CoA = a medium-chain fatty acyl-CoA + AMP + diphosphate. It participates in lipid metabolism; fatty acid metabolism. This Ectopseudomonas oleovorans (Pseudomonas oleovorans) protein is Medium-chain-fatty-acid--CoA ligase.